Reading from the N-terminus, the 79-residue chain is uncharacterized protein (79 aa).

Helical transmembrane passes span 28–48 (CIIL…ALLA) and 51–71 (VALT…AFTV).

It is found in the cell membrane. This is an uncharacterized protein from Methanocaldococcus jannaschii (strain ATCC 43067 / DSM 2661 / JAL-1 / JCM 10045 / NBRC 100440) (Methanococcus jannaschii).